The following is a 136-amino-acid chain: ATP synthase epsilon chain (136 aa).

Belongs to the ATPase epsilon chain family. As to quaternary structure, F-type ATPases have 2 components, CF(1) - the catalytic core - and CF(0) - the membrane proton channel. CF(1) has five subunits: alpha(3), beta(3), gamma(1), delta(1), epsilon(1). CF(0) has three main subunits: a, b and c.

Its subcellular location is the cell membrane. Produces ATP from ADP in the presence of a proton gradient across the membrane. The protein is ATP synthase epsilon chain of Ureaplasma parvum serovar 3 (strain ATCC 27815 / 27 / NCTC 11736).